Here is a 269-residue protein sequence, read N- to C-terminus: Putative ABC transporter ATP-binding protein PF0528 (269 aa).

One can recognise an ABC transporter domain in the interval 6 to 237; sequence IVVENLYSSY…EILKRNNLDV (232 aa). Residue 39–46 participates in ATP binding; it reads GPNGAGKS.

It belongs to the ABC transporter superfamily.

It is found in the cell membrane. Its function is as follows. Probably part of an ABC transporter complex. Responsible for energy coupling to the transport system. This is Putative ABC transporter ATP-binding protein PF0528 from Pyrococcus furiosus (strain ATCC 43587 / DSM 3638 / JCM 8422 / Vc1).